Reading from the N-terminus, the 222-residue chain is Tegument protein UL26 (222 aa).

It belongs to the herpesviridae US22 family. Interacts with UL25. Interacts with ISGylation machinery components ISG15, UBA7 and HERC5; these interactions inhibit global protein ISGylation. In terms of processing, ISGylated; ISGylation regulates UL26 stability and inhibits its activities to suppress NF-kappa-B signaling.

It is found in the virion tegument. It localises to the host nucleus. Functionally, plays a role in the inhibition of host NF-kappa-B. This inhibition affects both the canonical and the non-canonical pathways. Blocks the induction of host IKK phosphorylation. May also influence the normal phosphorylation state of several tegument proteins including pp28 in virions. Also suppresses virus-induced ISGylation independent of its own ISGylation. The chain is Tegument protein UL26 (UL26) from Homo sapiens (Human).